The following is a 185-amino-acid chain: Ribosome-recycling factor (185 aa).

This sequence belongs to the RRF family.

It is found in the cytoplasm. In terms of biological role, responsible for the release of ribosomes from messenger RNA at the termination of protein biosynthesis. May increase the efficiency of translation by recycling ribosomes from one round of translation to another. The protein is Ribosome-recycling factor of Mannheimia succiniciproducens (strain KCTC 0769BP / MBEL55E).